The chain runs to 903 residues: Protein translocase subunit SecA (903 aa).

ATP contacts are provided by residues Gln89, 107–111, and Asp502; that span reads GEGKT. Residues Cys886, Cys888, Cys897, and His898 each contribute to the Zn(2+) site.

Belongs to the SecA family. In terms of assembly, monomer and homodimer. Part of the essential Sec protein translocation apparatus which comprises SecA, SecYEG and auxiliary proteins SecDF-YajC and YidC. Requires Zn(2+) as cofactor.

It is found in the cell inner membrane. The protein resides in the cytoplasm. The enzyme catalyses ATP + H2O + cellular proteinSide 1 = ADP + phosphate + cellular proteinSide 2.. Part of the Sec protein translocase complex. Interacts with the SecYEG preprotein conducting channel. Has a central role in coupling the hydrolysis of ATP to the transfer of proteins into and across the cell membrane, serving both as a receptor for the preprotein-SecB complex and as an ATP-driven molecular motor driving the stepwise translocation of polypeptide chains across the membrane. The polypeptide is Protein translocase subunit SecA (Rhizobium meliloti (strain 1021) (Ensifer meliloti)).